The chain runs to 515 residues: MSMIAAFYSNKSILITGATGFLGKVLMEKLFRTSPHLKVIYILVRPKSGQTLQERVFQILNSKLFEKVKEVCPNVHEKIRPISADLNQRDFAISKEDVQELLSCTNIIFHCAATVRFDAHLREAVQLNVTATQQLLLMASQMPKLEAFIHISTAFSNCNLSHIDEVIYPCPVEPRKIIDSMEWLDDSIIEEITPKLIGDRPNTYTYTKALGEIVVQQESGNLNVAIVRPSIVGATWQEPFPGWVDNLNGPSGLIIATGKGFLRSIKATPMAVADVIPVDTVVNLTIAVGWYTAVHRPKSTLIYHSTSGNLNPCNWYKMGLQVLATIEKIPFESAFRRPNADFTTSNFTTHYWNTVSHRVPAIIYDFYLRLTGRKPRMLKLMNRLLKTISMLEYFINHSWEWSTNNTEMLLSELSPEDQRVFNFDVRQLNWLEYIENYVLGVKKYLLKEDLAGIPKAKQHLRRLRNIHYLFNTALFLIIWRLLIARSQMARNVWFFIVSFCYKFISYFRASSTLKV.

Residues 1–464 lie on the Cytoplasmic side of the membrane; that stretch reads MSMIAAFYSN…KAKQHLRRLR (464 aa). A helical membrane pass occupies residues 465-484; that stretch reads NIHYLFNTALFLIIWRLLIA. Over 485-515 the chain is Peroxisomal; sequence RSQMARNVWFFIVSFCYKFISYFRASSTLKV.

Belongs to the fatty acyl-CoA reductase family. As to expression, specifically expressed in the meibomian glands of the eyelid and the sebaceous glands of the skin. Also expressed in the brain where large quantities of ether lipids are synthesized.

The protein resides in the peroxisome membrane. The enzyme catalyses a long-chain fatty acyl-CoA + 2 NADPH + 2 H(+) = a long-chain primary fatty alcohol + 2 NADP(+) + CoA. It carries out the reaction hexadecanoyl-CoA + 2 NADPH + 2 H(+) = hexadecan-1-ol + 2 NADP(+) + CoA. It catalyses the reaction octadecanoyl-CoA + 2 NADPH + 2 H(+) = octadecan-1-ol + 2 NADP(+) + CoA. The catalysed reaction is a very long-chain fatty acyl-CoA + 2 NADPH + 2 H(+) = a very long-chain primary fatty alcohol + 2 NADP(+) + CoA. The enzyme catalyses an ultra-long-chain fatty acyl-CoA + 2 NADPH + 2 H(+) = an ultra long-chain primary fatty alcohol + 2 NADP(+) + CoA. It carries out the reaction eicosanoyl-CoA + 2 NADPH + 2 H(+) = eicosan-1-ol + 2 NADP(+) + CoA. It catalyses the reaction docosanoyl-CoA + 2 NADPH + 2 H(+) = docosan-1-ol + 2 NADP(+) + CoA. The catalysed reaction is tetracosanoyl-CoA + 2 NADPH + 2 H(+) = tetracosan-1-ol + 2 NADP(+) + CoA. The enzyme catalyses hexacosanoyl-CoA + 2 NADPH + 2 H(+) = hexacosan-1-ol + 2 NADP(+) + CoA. It carries out the reaction octacosanoyl-CoA + 2 NADPH + 2 H(+) = octacosan-1-ol + 2 NADP(+) + CoA. It catalyses the reaction triacontanoyl-CoA + 2 NADPH + 2 H(+) = triacontan-1-ol + 2 NADP(+) + CoA. The catalysed reaction is 18-methylnonadecanoyl-CoA + 2 NADPH + 2 H(+) = 18-methylnonadecan-1-ol + 2 NADP(+) + CoA. The enzyme catalyses 20-methylheneicosanoyl-CoA + 2 NADPH + 2 H(+) = 20-methylheneicosan-1-ol + 2 NADP(+) + CoA. It carries out the reaction 22-methyltricosanoyl-CoA + 2 NADPH + 2 H(+) = 22-methyltricosan-1-ol + 2 NADP(+) + CoA. It catalyses the reaction 24-methylpentacosanoyl-CoA + 2 NADPH + 2 H(+) = 24-methylpentacosan-1-ol + 2 NADP(+) + CoA. In terms of biological role, catalyzes the reduction of saturated but not unsaturated C16 or C18 fatty acyl-CoA to fatty alcohols. A lower activity can be observed with shorter fatty acyl-CoA substrates. Can produce very long-chain and ultra long-chain FAls, regardless of whether they have a straight or branched chain. It may play a role in the production of ether lipids/plasmalogens and wax monoesters which synthesis requires fatty alcohols as substrates. The polypeptide is Fatty acyl-CoA reductase 2 (Mus musculus (Mouse)).